A 168-amino-acid polypeptide reads, in one-letter code: Lipoprotein signal peptidase (168 aa).

3 helical membrane passes run leucine 8–valine 28, glycine 61–isoleucine 81, and phenylalanine 91–phenylalanine 111. Catalysis depends on residues aspartate 117 and aspartate 135. A helical transmembrane segment spans residues phenylalanine 128–tyrosine 148.

The protein belongs to the peptidase A8 family.

It localises to the cell membrane. It carries out the reaction Release of signal peptides from bacterial membrane prolipoproteins. Hydrolyzes -Xaa-Yaa-Zaa-|-(S,diacylglyceryl)Cys-, in which Xaa is hydrophobic (preferably Leu), and Yaa (Ala or Ser) and Zaa (Gly or Ala) have small, neutral side chains.. It functions in the pathway protein modification; lipoprotein biosynthesis (signal peptide cleavage). This protein specifically catalyzes the removal of signal peptides from prolipoproteins. This chain is Lipoprotein signal peptidase, found in Anoxybacillus flavithermus (strain DSM 21510 / WK1).